The following is a 188-amino-acid chain: MKYLIIGLGNIGSEYHETRHNIGFMVLDDLAQEKGVTFDLKRHAHIAEVKVKGRTLILVKPTTYMNLSGKAVQYWMQEEKIALENILVITDDLALPFGTLRMRMKGSSGGHNGLSHIEQTLASANYTRLRMGVGSDFAKGQQVDYVLAPFSAEEQKEMPDVLKRAKDAVTGFATIGVERAMNAVNTKK.

Position 15 (Tyr-15) interacts with tRNA. Catalysis depends on His-20, which acts as the Proton acceptor. 3 residues coordinate tRNA: Tyr-64, Asn-66, and Asn-112.

This sequence belongs to the PTH family. In terms of assembly, monomer.

It is found in the cytoplasm. The catalysed reaction is an N-acyl-L-alpha-aminoacyl-tRNA + H2O = an N-acyl-L-amino acid + a tRNA + H(+). Its function is as follows. Hydrolyzes ribosome-free peptidyl-tRNAs (with 1 or more amino acids incorporated), which drop off the ribosome during protein synthesis, or as a result of ribosome stalling. Functionally, catalyzes the release of premature peptidyl moieties from peptidyl-tRNA molecules trapped in stalled 50S ribosomal subunits, and thus maintains levels of free tRNAs and 50S ribosomes. This chain is Peptidyl-tRNA hydrolase, found in Cytophaga hutchinsonii (strain ATCC 33406 / DSM 1761 / CIP 103989 / NBRC 15051 / NCIMB 9469 / D465).